We begin with the raw amino-acid sequence, 100 residues long: Small ribosomal subunit protein uS14c (100 aa).

Belongs to the universal ribosomal protein uS14 family. In terms of assembly, part of the 30S ribosomal subunit.

It localises to the plastid. The protein resides in the chloroplast. In terms of biological role, binds 16S rRNA, required for the assembly of 30S particles. The chain is Small ribosomal subunit protein uS14c from Trieres chinensis (Marine centric diatom).